Here is a 311-residue protein sequence, read N- to C-terminus: DNA repair and recombination protein RadA (311 aa).

104-111 (GEFGSGKS) is an ATP binding site.

This sequence belongs to the eukaryotic RecA-like protein family.

Its function is as follows. Involved in DNA repair and in homologous recombination. Binds and assemble on single-stranded DNA to form a nucleoprotein filament. Hydrolyzes ATP in a ssDNA-dependent manner and promotes DNA strand exchange between homologous DNA molecules. In Methanosphaera stadtmanae (strain ATCC 43021 / DSM 3091 / JCM 11832 / MCB-3), this protein is DNA repair and recombination protein RadA.